Consider the following 258-residue polypeptide: Deoxyribose-phosphate aldolase (258 aa).

Catalysis depends on D102, which acts as the Proton donor/acceptor. Residue K165 is the Schiff-base intermediate with acetaldehyde of the active site. Residue K199 is the Proton donor/acceptor of the active site.

The protein belongs to the DeoC/FbaB aldolase family. DeoC type 2 subfamily.

It is found in the cytoplasm. It catalyses the reaction 2-deoxy-D-ribose 5-phosphate = D-glyceraldehyde 3-phosphate + acetaldehyde. Its pathway is carbohydrate degradation; 2-deoxy-D-ribose 1-phosphate degradation; D-glyceraldehyde 3-phosphate and acetaldehyde from 2-deoxy-alpha-D-ribose 1-phosphate: step 2/2. Functionally, catalyzes a reversible aldol reaction between acetaldehyde and D-glyceraldehyde 3-phosphate to generate 2-deoxy-D-ribose 5-phosphate. The polypeptide is Deoxyribose-phosphate aldolase (Aliivibrio fischeri (strain ATCC 700601 / ES114) (Vibrio fischeri)).